A 231-amino-acid polypeptide reads, in one-letter code: Cysteine-rich venom protein VAR10 (231 aa).

A signal peptide spans 1–19 (MILLKLYLTLAAILCQSRG). Residues 41–169 (NKHNDLRRTV…SLKYFQVCQY (129 aa)) enclose the SCP domain. 5 disulfide bridges follow: C77–C156, C95–C170, C151–C167, C189–C196, and C214–C231. In terms of domain architecture, ShKT spans 205 to 231 (CAYNDDYTSCPDLTKQVGCHHPVTANC).

It belongs to the CRISP family. In terms of processing, contains 8 disulfide bonds. In terms of tissue distribution, expressed by the venom gland.

The protein resides in the secreted. In terms of biological role, blocks ryanodine receptors, and potassium channels. The sequence is that of Cysteine-rich venom protein VAR10 from Varanus varius (Lace monitor lizard).